Reading from the N-terminus, the 183-residue chain is Large ribosomal subunit protein uL5 (183 aa).

Belongs to the universal ribosomal protein uL5 family. As to quaternary structure, part of the 50S ribosomal subunit; part of the 5S rRNA/L5/L18/L25 subcomplex. Contacts the 5S rRNA and the P site tRNA. Forms a bridge to the 30S subunit in the 70S ribosome.

Its function is as follows. This is one of the proteins that bind and probably mediate the attachment of the 5S RNA into the large ribosomal subunit, where it forms part of the central protuberance. In the 70S ribosome it contacts protein S13 of the 30S subunit (bridge B1b), connecting the 2 subunits; this bridge is implicated in subunit movement. Contacts the P site tRNA; the 5S rRNA and some of its associated proteins might help stabilize positioning of ribosome-bound tRNAs. The polypeptide is Large ribosomal subunit protein uL5 (Legionella pneumophila (strain Lens)).